The sequence spans 142 residues: Large ribosomal subunit protein uL11 (142 aa).

Belongs to the universal ribosomal protein uL11 family. As to quaternary structure, part of the ribosomal stalk of the 50S ribosomal subunit. Interacts with L10 and the large rRNA to form the base of the stalk. L10 forms an elongated spine to which L12 dimers bind in a sequential fashion forming a multimeric L10(L12)X complex. Post-translationally, one or more lysine residues are methylated.

In terms of biological role, forms part of the ribosomal stalk which helps the ribosome interact with GTP-bound translation factors. The chain is Large ribosomal subunit protein uL11 from Serratia marcescens.